The sequence spans 221 residues: Adenylate kinase (221 aa).

10–15 (GAGKGT) contributes to the ATP binding site. The tract at residues 30 to 59 (STGDMLRAAVKAGTPLGLEAKRFMDAGELV) is NMP. AMP contacts are provided by residues threonine 31, arginine 36, 57–59 (ELV), 85–88 (GFPR), and glutamine 92. Residues 122-159 (GRRSHAASGRTYHVKFNPPKVEGVDDMTGEPLIQRDDD) form an LID region. ATP contacts are provided by residues arginine 123 and 132 to 133 (TY). 2 residues coordinate AMP: arginine 156 and arginine 167. Glycine 207 is a binding site for ATP.

It belongs to the adenylate kinase family. As to quaternary structure, monomer.

Its subcellular location is the cytoplasm. It carries out the reaction AMP + ATP = 2 ADP. The protein operates within purine metabolism; AMP biosynthesis via salvage pathway; AMP from ADP: step 1/1. Functionally, catalyzes the reversible transfer of the terminal phosphate group between ATP and AMP. Plays an important role in cellular energy homeostasis and in adenine nucleotide metabolism. This is Adenylate kinase from Paraburkholderia phytofirmans (strain DSM 17436 / LMG 22146 / PsJN) (Burkholderia phytofirmans).